Here is a 442-residue protein sequence, read N- to C-terminus: Proline--tRNA ligase (442 aa).

This sequence belongs to the class-II aminoacyl-tRNA synthetase family. ProS type 2 subfamily. As to quaternary structure, homodimer.

The protein resides in the cytoplasm. The enzyme catalyses tRNA(Pro) + L-proline + ATP = L-prolyl-tRNA(Pro) + AMP + diphosphate. Catalyzes the attachment of proline to tRNA(Pro) in a two-step reaction: proline is first activated by ATP to form Pro-AMP and then transferred to the acceptor end of tRNA(Pro). This Rhizobium meliloti (strain 1021) (Ensifer meliloti) protein is Proline--tRNA ligase.